Here is a 469-residue protein sequence, read N- to C-terminus: Peripherin (469 aa).

Low complexity-rich tracts occupy residues 1-18 (MSHP…SYRR) and 27-53 (SPGA…PGSS). Residues 1-60 (MSHPSGLRSSVSSTSYRRTFGPPPSLSPGAFSYSSSSRFSSSRLLGSASPGSSVRLGSFR) form a disordered region. The segment at 1-98 (MSHPSGLRSS…FLATRSNEKQ (98 aa)) is head. Tyrosine 16 carries the post-translational modification 3'-nitrotyrosine. Phosphoserine is present on residues serine 27, serine 49, and serine 58. The IF rod domain occupies 96 to 406 (EKQELQELND…KLLEGEESRI (311 aa)). Positions 99–131 (ELQELNDRFANFIEKVRFLEQQNAALRGELNQA) are coil 1A. The linker 1 stretch occupies residues 132 to 142 (RGQEPARADQL). The segment at 143 to 238 (CQQELRELRR…KLHEEELRDL (96 aa)) is coil 1B. Residues 239-261 (QLSVESQQVQHVEVEATVKPELT) are linker 2. The tract at residues 262 to 404 (AALRDIRAQY…YRKLLEGEES (143 aa)) is coil 2. Tyrosine 378 carries the post-translational modification 3'-nitrotyrosine. Positions 405 to 469 (RISVPVHSFA…SELDKSPQSY (65 aa)) are tail. Residues 447 to 469 (GEQVVTESQKEQHSELDKSPQSY) are disordered. The residue at position 469 (tyrosine 469) is a Phosphotyrosine.

The protein belongs to the intermediate filament family. As to quaternary structure, forms homodimers (in vitro). Homopolymerizes into a filamentous network (in vitro). Forms heterodimers with NEFL, NEFM or NEFH (in vitro). Interacts with DST (via C-terminus). Interacts with RAB7A; the interaction is direct. Interacts with PRKCE (via phorbol-ester/DAG-type 2 domain). Phosphorylated; phosphorylation increases after nerve injury in regenerating neurons.

It localises to the cytoplasm. Its subcellular location is the cytoskeleton. It is found in the cell projection. The protein resides in the axon. The protein localises to the perikaryon. Its function is as follows. Class-III neuronal intermediate filament protein. May form an independent structural network without the involvement of other neurofilaments or may cooperate with the neuronal intermediate filament proteins NEFL, NEFH, NEFM and INA to form a filamentous network. Assembly of the neuronal intermediate filaments may be regulated by RAB7A. Plays a role in the development of unmyelinated sensory neurons. May be involved in axon elongation and axon regeneration after injury. Inhibits neurite extension in type II spiral ganglion neurons in the cochlea. In Bos taurus (Bovine), this protein is Peripherin (PRPH).